Consider the following 119-residue polypeptide: Large ribosomal subunit protein bL20 (119 aa).

It belongs to the bacterial ribosomal protein bL20 family.

Binds directly to 23S ribosomal RNA and is necessary for the in vitro assembly process of the 50S ribosomal subunit. It is not involved in the protein synthesizing functions of that subunit. In Erythrobacter litoralis (strain HTCC2594), this protein is Large ribosomal subunit protein bL20.